We begin with the raw amino-acid sequence, 579 residues long: Acyl-coenzyme A synthetase ACSM5, mitochondrial (579 aa).

A mitochondrion-targeting transit peptide spans 1–26 (MRPWLRHLVLQALRNSRAFCGSHGKP). The residue at position 97 (lysine 97) is an N6-acetyllysine; alternate. Lysine 97 is subject to N6-succinyllysine; alternate. Residue lysine 152 is modified to N6-acetyllysine. 230-238 (TSGTTGAPK) provides a ligand contact to ATP. N6-acetyllysine; alternate is present on lysine 303. Position 303 is an N6-succinyllysine; alternate (lysine 303). ATP-binding positions include 368–373 (EGYGQS), aspartate 455, arginine 470, and lysine 566.

It belongs to the ATP-dependent AMP-binding enzyme family. The cofactor is Mg(2+). Requires Mn(2+) as cofactor. Detected in kidney and liver.

It is found in the mitochondrion matrix. It carries out the reaction a medium-chain fatty acid + ATP + CoA = a medium-chain fatty acyl-CoA + AMP + diphosphate. Functionally, catalyzes the activation of fatty acids by CoA to produce an acyl-CoA, the first step in fatty acid metabolism. This is Acyl-coenzyme A synthetase ACSM5, mitochondrial (ACSM5) from Homo sapiens (Human).